The chain runs to 612 residues: C4-dicarboxylate transport sensor protein DctB (612 aa).

Helical transmembrane passes span 23-43 and 292-312; these read SLVI…YFAE and VLLI…LLTL. The stretch at 328-376 forms a coiled coil; it reads KRQLEERVLERTRELENANAQLQQEVHEREQAQRELMRAQDEVVQAGKL. In terms of domain architecture, Histidine kinase spans 385-599; that stretch reads SISHELNQPL…VVRLHLLPGV (215 aa). Residue histidine 388 is modified to Phosphohistidine; by autocatalysis.

In terms of processing, autophosphorylated.

Its subcellular location is the cell inner membrane. It carries out the reaction ATP + protein L-histidine = ADP + protein N-phospho-L-histidine.. Member of the two-component regulatory system DctB/DctD, which regulates C4-dicarboxylate transport via regulation of expression of the dctPQM operon and dctA. DctB functions as a membrane-associated protein kinase that phosphorylates DctD in response to environmental signals. This Pseudomonas aeruginosa (strain ATCC 15692 / DSM 22644 / CIP 104116 / JCM 14847 / LMG 12228 / 1C / PRS 101 / PAO1) protein is C4-dicarboxylate transport sensor protein DctB.